We begin with the raw amino-acid sequence, 362 residues long: Sphingolipid delta(4)-desaturase (362 aa).

Over residues 1 to 10 (MAESTATTTA) the composition is skewed to low complexity. The tract at residues 1-20 (MAESTATTTAVPPPAEESWN) is disordered. 3 consecutive transmembrane segments (helical) span residues 60–80 (PLTK…AYLL), 90–110 (FFLT…LAIH), and 121–143 (TLYN…AASF). A Histidine box-1 motif is present at residues 110–114 (HELSH). The Histidine box-2 signature appears at 147-151 (HMEHH). The next 3 membrane-spanning stretches (helical) occupy residues 169–189 (LILF…LLFY), 200–220 (PFTL…YLVV), and 228–248 (LAYF…AGHF). The Histidine box-3 motif lies at 290–294 (HIEHH).

It belongs to the fatty acid desaturase type 1 family. DEGS subfamily.

The protein resides in the membrane. The catalysed reaction is an N-acylsphinganine + 2 Fe(II)-[cytochrome b5] + O2 + 2 H(+) = an N-acylsphing-4-enine + 2 Fe(III)-[cytochrome b5] + 2 H2O. The protein operates within lipid metabolism; sphingolipid metabolism. In terms of biological role, delta(4)-fatty-acid desaturase which introduces a double bond at the 4-position in the long-chain base (LCB) of ceramides. Required for sphingosine biosynthesis. The sequence is that of Sphingolipid delta(4)-desaturase (dsd1) from Schizosaccharomyces pombe (strain 972 / ATCC 24843) (Fission yeast).